We begin with the raw amino-acid sequence, 154 residues long: Endoribonuclease YbeY (154 aa).

3 residues coordinate Zn(2+): His114, His118, and His124.

This sequence belongs to the endoribonuclease YbeY family. It depends on Zn(2+) as a cofactor.

It localises to the cytoplasm. Single strand-specific metallo-endoribonuclease involved in late-stage 70S ribosome quality control and in maturation of the 3' terminus of the 16S rRNA. This Histophilus somni (strain 2336) (Haemophilus somnus) protein is Endoribonuclease YbeY.